The primary structure comprises 754 residues: Probable galactinol--sucrose galactosyltransferase 1 (754 aa).

It belongs to the glycosyl hydrolases 36 family.

It carries out the reaction alpha-D-galactosyl-(1-&gt;3)-1D-myo-inositol + sucrose = raffinose + myo-inositol. Its function is as follows. Transglycosidase operating by a ping-pong reaction mechanism. Involved in the synthesis of raffinose, a major soluble carbohydrate in seeds, roots and tubers. The chain is Probable galactinol--sucrose galactosyltransferase 1 (RFS1) from Arabidopsis thaliana (Mouse-ear cress).